The sequence spans 434 residues: Glucose-6-phosphate 1-dehydrogenase (434 aa).

NADP(+)-binding positions include 7-14 (GSSGDLAK), Arg36, Tyr93, and Lys112. Residues Lys112, 137–141 (HYLLK), Glu175, and Asp193 contribute to the D-glucose 6-phosphate site. His198 serves as the catalytic Proton acceptor. D-glucose 6-phosphate contacts are provided by Lys280 and Lys285. NADP(+) is bound at residue Arg286.

It belongs to the glucose-6-phosphate dehydrogenase family.

It carries out the reaction D-glucose 6-phosphate + NADP(+) = 6-phospho-D-glucono-1,5-lactone + NADPH + H(+). Its pathway is carbohydrate degradation; pentose phosphate pathway; D-ribulose 5-phosphate from D-glucose 6-phosphate (oxidative stage): step 1/3. In terms of biological role, catalyzes the rate-limiting step of the oxidative pentose-phosphate pathway, which represents a route for the dissimilation of carbohydrates besides glycolysis. The main function of this enzyme is to provide reducing power (NADPH) and pentose phosphates for fatty acid and nucleic acid synthesis. This is Glucose-6-phosphate 1-dehydrogenase (ZWF1) from Encephalitozoon cuniculi (strain GB-M1) (Microsporidian parasite).